Here is a 75-residue protein sequence, read N- to C-terminus: MKAEIHPNYHSITVVMTDGTEYVTRSTWGNEGDKLNLDIDSKSHPAWTGGQQQMLDRGGRVSRFQKKFSGFLKKD.

It belongs to the bacterial ribosomal protein bL31 family. Type A subfamily. As to quaternary structure, part of the 50S ribosomal subunit.

In terms of biological role, binds the 23S rRNA. The sequence is that of Large ribosomal subunit protein bL31 from Rhodopseudomonas palustris (strain BisB18).